The following is a 454-amino-acid chain: MLHPQKLEQQNYETFNKAYLKSKQLVTEGVSIDEISSNNDEQRKRIAMEKYRMGIEYFEKALKISPDKVYPEKRSEVITHREAMKRNLEATKGRLSDLEKMFPSKGNRNLQHRPVQFVSPSISKPQTAQLSSRPISSEKKNINYSNARTRSNLLKGVDDKFGGPLLNEILNQDDVKMSDIIGAETAKRALEETVILPTVNPSLFSGLRQPAQGILLFGPPGNGKTLLARAVAGECGSTMFLNVSAASLTSKWVGDAEKIVRALFQIARNGQPTIIFIDEIDSILCERNEKETEVSRRMKTEFLIQMDGMLSSKDDRLLVIGATNRPEELDSAILRRFPKRILIDVPNAAARLKLIMSLLEKTKTSFDLGLTQRQILAEWTHGYSNSDLVALCREAAMVPIRDLSRKDIKNLVSTELRPITLRDFEIAMKAIKPSTNERMLQKLRKYAATAGQSD.

218 to 225 (GPPGNGKT) contacts ATP.

Belongs to the AAA ATPase family. Spastin subfamily. Homohexamer. The homohexamer is stabilized by ATP-binding. The homohexamer may adopt a ring conformation through which microtubules pass prior to being severed. Interacts with microtubules.

Its subcellular location is the cytoplasm. The protein localises to the cytoskeleton. The protein resides in the perinuclear region. It catalyses the reaction n ATP + n H2O + a microtubule = n ADP + n phosphate + (n+1) alpha/beta tubulin heterodimers.. In terms of biological role, severs microtubules, probably in an ATP-dependent fashion. The protein is Probable spastin homolog Bm1_53365 of Brugia malayi (Filarial nematode worm).